The chain runs to 718 residues: Protein Smaug homolog 1 (718 aa).

Serine 168 carries the post-translational modification Phosphoserine. The segment at 278–310 (ARGPQCLPSDHAPLSPQSSVASSGSGGSEHLED) is disordered. The 74-residue stretch at 323 to 396 (SGMKDVPAWL…LKSLERDIIE (74 aa)) folds into the SAM domain. Disordered stretches follow at residues 417 to 474 (AYGS…LQPH) and 572 to 601 (NRGF…QYQI). At serine 420 the chain carries Phosphoserine. Threonine 424 is modified (phosphothreonine). The segment covering 453–466 (GATATGATATPSAG) has biased composition (low complexity). An Omega-N-methylarginine modification is found at arginine 573. At serine 580 the chain carries Phosphoserine.

The protein belongs to the SMAUG family.

It localises to the cytoplasm. The protein localises to the cell projection. It is found in the dendrite. Its subcellular location is the synapse. The protein resides in the synaptosome. Its function is as follows. Acts as a translational repressor of SRE-containing messengers. The sequence is that of Protein Smaug homolog 1 (SAMD4A) from Macaca fascicularis (Crab-eating macaque).